The primary structure comprises 206 residues: Na(+)-translocating NADH-quinone reductase subunit E (206 aa).

The next 6 membrane-spanning stretches (helical) occupy residues 12-32 (AVFV…FIAI), 36-56 (IQTA…TVPV), 85-105 (FLGL…LEMT), 118-138 (GIFL…LFMV), 148-168 (VVYG…LAGI), and 184-204 (LGIT…FSGV).

The protein belongs to the NqrDE/RnfAE family. In terms of assembly, composed of six subunits; NqrA, NqrB, NqrC, NqrD, NqrE and NqrF.

The protein resides in the cell inner membrane. The enzyme catalyses a ubiquinone + n Na(+)(in) + NADH + H(+) = a ubiquinol + n Na(+)(out) + NAD(+). In terms of biological role, NQR complex catalyzes the reduction of ubiquinone-1 to ubiquinol by two successive reactions, coupled with the transport of Na(+) ions from the cytoplasm to the periplasm. NqrA to NqrE are probably involved in the second step, the conversion of ubisemiquinone to ubiquinol. The protein is Na(+)-translocating NADH-quinone reductase subunit E of Alcanivorax borkumensis (strain ATCC 700651 / DSM 11573 / NCIMB 13689 / SK2).